The primary structure comprises 481 residues: uncharacterized protein (481 aa).

This is an uncharacterized protein from Cryphonectria parasitica (Chestnut blight fungus).